The primary structure comprises 464 residues: JmjC domain-containing protein 1 (464 aa).

A JmjC domain is found at 182 to 349 (LYAKDMHLFR…QMYTALKEQY (168 aa)).

This chain is JmjC domain-containing protein 1 (jmj1), found in Schizosaccharomyces pombe (strain 972 / ATCC 24843) (Fission yeast).